The chain runs to 455 residues: Zinc finger and BTB domain-containing protein 8A.2 (455 aa).

Residues 24-92 (CDCHIMIDGH…MYSGKLNLSG (69 aa)) enclose the BTB domain. 2 consecutive C2H2-type zinc fingers follow at residues 299–321 (FKCP…LLCH) and 327–350 (YPCQ…RTIH).

It is found in the nucleus. In terms of biological role, may be involved in transcriptional regulation. This chain is Zinc finger and BTB domain-containing protein 8A.2 (zbtb8a.2), found in Xenopus tropicalis (Western clawed frog).